Consider the following 118-residue polypeptide: Holo-[acyl-carrier-protein] synthase (118 aa).

Mg(2+) is bound by residues D8 and E50.

This sequence belongs to the P-Pant transferase superfamily. AcpS family. It depends on Mg(2+) as a cofactor.

It is found in the cytoplasm. It catalyses the reaction apo-[ACP] + CoA = holo-[ACP] + adenosine 3',5'-bisphosphate + H(+). Transfers the 4'-phosphopantetheine moiety from coenzyme A to a Ser of acyl-carrier-protein. In Leifsonia xyli subsp. xyli (strain CTCB07), this protein is Holo-[acyl-carrier-protein] synthase.